We begin with the raw amino-acid sequence, 367 residues long: Indole glucosinolate O-methyltransferase 5 (367 aa).

5 residues coordinate S-adenosyl-L-homocysteine: G209, D232, D252, M253, and K266. H270 serves as the catalytic Proton acceptor.

The protein belongs to the class I-like SAM-binding methyltransferase superfamily. Cation-independent O-methyltransferase family.

Its pathway is secondary metabolite biosynthesis. Functionally, involved in indole glucosinolate biosynthesis. Catalyzes methoxylation reactions of the glucosinolate indole ring. Converts the hydroxy intermediates 4-hydroxy-indol-3-yl-methylglucosinolate (4OH-I3M) and 1-hydroxy-indol-3-yl-methylglucosinolate (1OH-I3M) to 4-methoxy-indol-3-yl-methylglucosinolate (4MO-I3M) and 1-methoxy-indol-3-yl-methylglucosinolate, respectively. In Arabidopsis thaliana (Mouse-ear cress), this protein is Indole glucosinolate O-methyltransferase 5.